We begin with the raw amino-acid sequence, 299 residues long: Bifunctional protein FolD 2 (299 aa).

Residues G168–S170, S193, and I234 each bind NADP(+).

Belongs to the tetrahydrofolate dehydrogenase/cyclohydrolase family. As to quaternary structure, homodimer.

The enzyme catalyses (6R)-5,10-methylene-5,6,7,8-tetrahydrofolate + NADP(+) = (6R)-5,10-methenyltetrahydrofolate + NADPH. The catalysed reaction is (6R)-5,10-methenyltetrahydrofolate + H2O = (6R)-10-formyltetrahydrofolate + H(+). Its pathway is one-carbon metabolism; tetrahydrofolate interconversion. Its function is as follows. Catalyzes the oxidation of 5,10-methylenetetrahydrofolate to 5,10-methenyltetrahydrofolate and then the hydrolysis of 5,10-methenyltetrahydrofolate to 10-formyltetrahydrofolate. This is Bifunctional protein FolD 2 from Rhizobium meliloti (strain 1021) (Ensifer meliloti).